Consider the following 365-residue polypeptide: MTEKSAELVRLNELKAFVSTKAGVKGLVDTKITEVPRIFHIPSSSTLSNNKPSDIFGLNLTVPIIDLGDGNTSAARNVLVSKIKEAAENWGFFQVINHGIPLTVLKDIKQGVRRFHEEDPEVKKQYFATDFNTRFAYNTNFDIHYSSPMNWKDSFTCYTCPQDPLKPEEIPLACRDVVIEYSKHVMELGGLLFQLLSEALGLDSEILKNMDCLKGLLMLCHYYPPCPQPDLTLGISKHTDNSFITILLQDQIGGLQVLHQDSWVDVTPVPGALVISIGDFMQLITNDKFLSMEHRVRANRDGPRISVACFVSSGVFPNSTVYGPIKELLSDENPAKYRDITIPEYTVGYLASIFDGKSHLSKFRI.

In terms of domain architecture, Fe2OG dioxygenase spans 214-313; that stretch reads KGLLMLCHYY…RISVACFVSS (100 aa). H238, D240, and H294 together coordinate Fe cation. A 2-oxoglutarate-binding site is contributed by R304.

Belongs to the iron/ascorbate-dependent oxidoreductase family. It depends on Fe(2+) as a cofactor.

The sequence is that of 1-aminocyclopropane-1-carboxylate oxidase homolog 9 from Arabidopsis thaliana (Mouse-ear cress).